Consider the following 209-residue polypeptide: Thymidylate kinase (209 aa).

10 to 17 (GLDGAGKS) is an ATP binding site.

Belongs to the thymidylate kinase family.

It carries out the reaction dTMP + ATP = dTDP + ADP. In terms of biological role, phosphorylation of dTMP to form dTDP in both de novo and salvage pathways of dTTP synthesis. The polypeptide is Thymidylate kinase (Francisella tularensis subsp. holarctica (strain OSU18)).